We begin with the raw amino-acid sequence, 75 residues long: Brevinin-2SN2 (75 aa).

The signal sequence occupies residues 1–22; that stretch reads MFTMKKSLLFLFFLGTISLSFC. Residues 23–40 constitute a propeptide, removed in mature form; sequence EEERGADEDDGGEMTEEE. A disulfide bridge links Cys69 with Cys75.

The protein belongs to the frog skin active peptide (FSAP) family. Brevinin subfamily. In terms of tissue distribution, expressed by the skin glands.

Its subcellular location is the secreted. Antimicrobial peptide. Active against some Gram-negative and a variety of Gram-positive bacterial strains. Active against fungus C.glabrata 090902 but not against C.albicans ATCC 10231. Shows hemolytic activity against human erythrocytes. This is Brevinin-2SN2 from Sylvirana spinulosa (Fine-spined frog).